The following is a 105-amino-acid chain: MTVTQQPKIRIKLKAYNSSLLNTSCKKIVDTAERTNAIAVGPIPLPTKRRIYCVLRSPHVDKDSREHFEIRSHRRIIDIHQPSSQTIDALMKLNLPSGVDIEVKL.

It belongs to the universal ribosomal protein uS10 family. Part of the 30S ribosomal subunit.

It is found in the plastid. The protein resides in the chloroplast. Functionally, involved in the binding of tRNA to the ribosomes. This chain is Small ribosomal subunit protein uS10c, found in Porphyra purpurea (Red seaweed).